The chain runs to 152 residues: MKTPIELKILDSRIGSQFPLPAYATPGSAGMDLRAMIETTMVIQPGETQLIPTGIAVHVADPSLAAVILPRSGMGHKHGIVLGNLVGLIDSDYQGPLMVSCWNRSNEPFTLEIGDRLAQLVFVPVVQAEFKLVDEFDTSDRGEGGFGHSGTQ.

Residues 71–73 (RSG), asparagine 84, 88–90 (LID), and methionine 98 each bind substrate.

This sequence belongs to the dUTPase family. Mg(2+) is required as a cofactor.

The enzyme catalyses dUTP + H2O = dUMP + diphosphate + H(+). The protein operates within pyrimidine metabolism; dUMP biosynthesis; dUMP from dCTP (dUTP route): step 2/2. In terms of biological role, this enzyme is involved in nucleotide metabolism: it produces dUMP, the immediate precursor of thymidine nucleotides and it decreases the intracellular concentration of dUTP so that uracil cannot be incorporated into DNA. This chain is Deoxyuridine 5'-triphosphate nucleotidohydrolase, found in Shewanella loihica (strain ATCC BAA-1088 / PV-4).